We begin with the raw amino-acid sequence, 335 residues long: MIEFQQVHKTYRVAGREIPALNPTSLTIEDGQVFGLIGHSGAGKSTMLRLINRLEEPSGGTIIVDGEDVTAFNASQLRGFRQQVGMIFQHFNLLASKTVADNVALPLALAGELSRSEIDKRVTELLARVGLSDHAKKYPAQLSGGQKQRVGIARALSTNPKILLCDEATSALDPQTTASVLQLLAEINRELKLTIVLITHEMDVIRRVCDRVAVMDAGQIVEQGSVAEVFLHPQHPTTKRFVQEDEQVDEGEQRDDFAHVPGRIVRLTFQGDATYAPLLGTVARETGVDYSILAGRIDRIKDVPYGQLTLALIGGDMEAAFARFKAADVHMEVLR.

The ABC transporter domain maps to 2 to 242; that stretch reads IEFQQVHKTY…PQHPTTKRFV (241 aa). 38-45 is a binding site for ATP; sequence GHSGAGKS.

The protein belongs to the ABC transporter superfamily. Methionine importer (TC 3.A.1.24) family. The complex is composed of two ATP-binding proteins (MetN), two transmembrane proteins (MetI) and a solute-binding protein (MetQ).

The protein resides in the cell inner membrane. It carries out the reaction L-methionine(out) + ATP + H2O = L-methionine(in) + ADP + phosphate + H(+). The catalysed reaction is D-methionine(out) + ATP + H2O = D-methionine(in) + ADP + phosphate + H(+). Functionally, part of the ABC transporter complex MetNIQ involved in methionine import. Responsible for energy coupling to the transport system. This chain is Methionine import ATP-binding protein MetN 1, found in Pseudomonas putida (strain ATCC 47054 / DSM 6125 / CFBP 8728 / NCIMB 11950 / KT2440).